Consider the following 438-residue polypeptide: 3-phosphoshikimate 1-carboxyvinyltransferase (438 aa).

3-phosphoshikimate-binding residues include Lys-20, Ser-21, and Arg-25. Residue Lys-20 participates in phosphoenolpyruvate binding. Gly-90 and Arg-118 together coordinate phosphoenolpyruvate. Positions 163, 164, 165, 191, 320, and 347 each coordinate 3-phosphoshikimate. Gln-165 is a binding site for phosphoenolpyruvate. Catalysis depends on Asp-320, which acts as the Proton acceptor. 2 residues coordinate phosphoenolpyruvate: Arg-351 and Arg-392.

It belongs to the EPSP synthase family. In terms of assembly, monomer.

Its subcellular location is the cytoplasm. It carries out the reaction 3-phosphoshikimate + phosphoenolpyruvate = 5-O-(1-carboxyvinyl)-3-phosphoshikimate + phosphate. The protein operates within metabolic intermediate biosynthesis; chorismate biosynthesis. Functionally, catalyzes the transfer of the enolpyruvyl moiety of phosphoenolpyruvate (PEP) to the 5-hydroxyl of shikimate-3-phosphate (S3P) to produce enolpyruvyl shikimate-3-phosphate and inorganic phosphate. The chain is 3-phosphoshikimate 1-carboxyvinyltransferase from Natronomonas pharaonis (strain ATCC 35678 / DSM 2160 / CIP 103997 / JCM 8858 / NBRC 14720 / NCIMB 2260 / Gabara) (Halobacterium pharaonis).